A 503-amino-acid chain; its full sequence is Excitatory amino acid transporter (503 aa).

At 1–18 (MPPDTRINKEIMVSWIRK) the chain is on the cytoplasmic side. The next 3 helical transmembrane spans lie at 19–39 (NLLL…GFLL), 59–79 (LMHM…ISGL), and 96–116 (TYYM…VLVI). Over 117–198 (HPGDPTIKKE…SLDYVKASVE (82 aa)) the chain is Extracellular. 2 N-linked (GlcNAc...) asparagine glycosylation sites follow: Asn177 and Asn187. Transmembrane regions (helical) follow at residues 199–219 (YTSG…GISL), 239–259 (VIMK…FCLI), 281–301 (VTVL…IFFV), 369–389 (AVAA…GQVV), and 400–420 (IGAA…LTAV).

It belongs to the dicarboxylate/amino acid:cation symporter (DAACS) (TC 2.A.23) family.

The protein resides in the membrane. In terms of biological role, transports L-glutamate and also L- and D-aspartate. Essential for terminating the postsynaptic action of glutamate by rapidly removing released glutamate from the synaptic cleft. Acts as a symport by cotransporting sodium. The polypeptide is Excitatory amino acid transporter (glt-1) (Caenorhabditis elegans).